The following is a 76-amino-acid chain: Exodeoxyribonuclease 7 small subunit (76 aa).

It belongs to the XseB family. Heterooligomer composed of large and small subunits.

The protein resides in the cytoplasm. It carries out the reaction Exonucleolytic cleavage in either 5'- to 3'- or 3'- to 5'-direction to yield nucleoside 5'-phosphates.. In terms of biological role, bidirectionally degrades single-stranded DNA into large acid-insoluble oligonucleotides, which are then degraded further into small acid-soluble oligonucleotides. The chain is Exodeoxyribonuclease 7 small subunit from Staphylococcus aureus (strain Mu3 / ATCC 700698).